The sequence spans 501 residues: Atypical kinase COQ8, mitochondrial (501 aa).

A mitochondrion-targeting transit peptide spans 1-29 (MVTNMVKLRNLRRLYCSSRLLRTIQNGRI). Residues 41–69 (YTTKSAKEGEENVERKHEEEKKDTLKSSS) are disordered. Basic and acidic residues predominate over residues 45-65 (SAKEGEENVERKHEEEKKDTL). Positions 134 to 137 (KIGQ) match the KxGQ motif motif. Residues 188–501 (KFDKIPMAAA…LFKEIFAYKV (314 aa)) form the Protein kinase domain. The AAAS motif signature appears at 195 to 198 (AAAS). Residues Ser198, Lys216, and 303–306 (MTRM) contribute to the ATP site. Asp346 (proton acceptor) is an active-site residue. Asn351 and Asp365 together coordinate ATP.

Belongs to the protein kinase superfamily. ADCK protein kinase family. As to quaternary structure, forms homopolymers. Predominantly associated with a complex of about 500 kDa.

The protein localises to the mitochondrion inner membrane. It functions in the pathway cofactor biosynthesis; ubiquinone biosynthesis. Functionally, atypical kinase involved in the biosynthesis of coenzyme Q, also named ubiquinone, an essential lipid-soluble electron transporter for aerobic cellular respiration. Its substrate specificity is still unclear: may act as a protein kinase that mediates phosphorylation of COQ3, COQ5 and/or COQ7. According to other reports, acts as a small molecule kinase, possibly a lipid kinase that phosphorylates a prenyl lipid in the ubiquinone biosynthesis pathway, as suggested by its ability to bind coenzyme Q lipid intermediates. The protein is Atypical kinase COQ8, mitochondrial (COQ8) of Saccharomyces cerevisiae (strain ATCC 204508 / S288c) (Baker's yeast).